A 376-amino-acid chain; its full sequence is O-demethylpuromycin-O-methyltransferase (376 aa).

Residues 1–28 (MAPTEATRGGPADPAPAPEAHRGGHTEH) form a disordered region. Residues 19–28 (EAHRGGHTEH) are compositionally biased toward basic and acidic residues. S-adenosyl-L-methionine-binding positions include Asp235 and 261–263 (GDF). The Proton acceptor role is filled by His281.

Belongs to the class I-like SAM-binding methyltransferase superfamily. Cation-independent O-methyltransferase family.

It catalyses the reaction O-demethylpuromycin + S-adenosyl-L-methionine = puromycin + S-adenosyl-L-homocysteine + H(+). The polypeptide is O-demethylpuromycin-O-methyltransferase (dmpM) (Streptomyces alboniger).